A 408-amino-acid polypeptide reads, in one-letter code: Lipoate--protein ligase 1 (408 aa).

Residues 1–18 constitute a mitochondrion transit peptide; sequence MKRIFRLVRRCHYSTEKR. Positions 60–242 constitute a BPL/LPL catalytic domain; sequence KFNEPILFLW…EFTKFYEQNY (183 aa). Positions 102, 107, and 110 each coordinate ATP. A (R)-lipoate-binding site is contributed by Gly107. Residue Asp153 coordinates Mg(2+). Lys160 contributes to the ATP binding site. Lys160 is a binding site for (R)-lipoate.

It belongs to the LplA family.

It is found in the mitochondrion. The enzyme catalyses L-lysyl-[lipoyl-carrier protein] + (R)-lipoate + ATP = N(6)-[(R)-lipoyl]-L-lysyl-[lipoyl-carrier protein] + AMP + diphosphate + H(+). It carries out the reaction (R)-dihydrolipoate + L-lysyl-[lipoyl-carrier protein] + ATP = N(6)-[(R)-dihydrolipoyl]-L-lysyl-[lipoyl-carrier protein] + AMP + diphosphate + H(+). The catalysed reaction is (R)-dihydrolipoate + ATP + H(+) = N(6)-[(R)-dihydrolipoyl]-5'-AMP + diphosphate. It catalyses the reaction N(6)-[(R)-dihydrolipoyl]-5'-AMP + L-lysyl-[lipoyl-carrier protein] = N(6)-[(R)-dihydrolipoyl]-L-lysyl-[lipoyl-carrier protein] + AMP + 2 H(+). Its pathway is protein modification; protein lipoylation via exogenous pathway; protein N(6)-(lipoyl)lysine from lipoate: step 1/2. It participates in protein modification; protein lipoylation via exogenous pathway; protein N(6)-(lipoyl)lysine from lipoate: step 2/2. Its activity is regulated as follows. Inhibited by the lipoate analog 8-bromo-octanoate (BrO). Catalytic activity is increased in the presence of Mg(2+). Catalyzes both the ATP-dependent activation of exogenously supplied lipoate to lipoyl-AMP and the transfer of the activated lipoyl onto the lipoyl domains of lipoate-dependent enzymes. In the mitochondrion, functions as a redox switch between two lipoylation routes. Senses the oxidation state of lipoate and determines which downstream enzymes will be lipoylated. In low reducing conditions, uses lipoate in its oxidized ring form to lipoylate glycine cleavage system H-protein GCVH. In high reducing conditions and together with LipL2, uses reduced lipoate (dihydrolipoate) to lipoylate the E2 component of the branched chain alpha-ketoacid dehydrogenase complex BCKDH-E2/BCDH and the E2 component of the alpha-ketoglutarate dehydrogenase complex KDH. LipL1 is responsible for catalysing the activation of lipoate, forming lipoyl-AMP while LipL2 is required but is not capable of catalyzing this reaction. The chain is Lipoate--protein ligase 1 from Plasmodium falciparum (isolate 3D7).